Consider the following 122-residue polypeptide: Large ribosomal subunit protein uL14 (122 aa).

It belongs to the universal ribosomal protein uL14 family. In terms of assembly, part of the 50S ribosomal subunit. Forms a cluster with proteins L3 and L19. In the 70S ribosome, L14 and L19 interact and together make contacts with the 16S rRNA in bridges B5 and B8.

Its function is as follows. Binds to 23S rRNA. Forms part of two intersubunit bridges in the 70S ribosome. This Shewanella sediminis (strain HAW-EB3) protein is Large ribosomal subunit protein uL14.